A 219-amino-acid polypeptide reads, in one-letter code: Salivary IL-4-inducing protein (219 aa).

A signal peptide spans 1 to 19 (MKYLLTLLMALSLVNLMLT). The disordered stretch occupies residues 19–109 (TRPTPEDDGG…KNDPRETYNK (91 aa)). Residues 30–43 (SEEPQTQETTGETT) show a composition bias toward low complexity. The segment covering 72–107 (DDTAKKEDDGESKDGEGSEKSDKEKGEPKNDPRETY) has biased composition (basic and acidic residues).

As to expression, salivary gland (at protein level).

The protein localises to the secreted. In terms of biological role, induces expression of IL4 in host skin by diverting host CD4 cells away from Th1 and towards Th2 responsiveness. Induces expression of IL10 in host skin. Down-regulates expression of IL12B, IFN-gamma (IFNG) and TNF-alpha (TNF) in host skin. This is Salivary IL-4-inducing protein from Aedes aegypti (Yellowfever mosquito).